A 297-amino-acid chain; its full sequence is Putative peptidyl-prolyl cis-trans isomerase YacD (297 aa).

Positions 1-32 (MKSRTIWTIILGALLVCCIAVAYTLTKSQAGA) are cleaved as a signal peptide. A PpiC domain is found at 154-247 (DDSYRIRHIV…NGYAIIQLKE (94 aa)).

The catalysed reaction is [protein]-peptidylproline (omega=180) = [protein]-peptidylproline (omega=0). The chain is Putative peptidyl-prolyl cis-trans isomerase YacD (yacD) from Bacillus subtilis (strain 168).